The sequence spans 707 residues: Metal transporter CNNM3 (707 aa).

The helical transmembrane segment at 11 to 27 (LGWLFAALCLGNAAGEA) threads the bilayer. N-linked (GlcNAc...) asparagine glycosylation is present at Asn-73. The 179-residue stretch at 130–308 (EAAPPWALGL…DPYSDLSKGV (179 aa)) folds into the CNNM transmembrane domain. Helical transmembrane passes span 193–213 (CALG…AVLL), 221–241 (AVPA…VVPA), and 261–281 (LAVL…ELAA). CBS domains follow at residues 318 to 379 (LTPL…CTPL) and 386 to 452 (YNHP…ILDE). A Phosphoserine modification is found at Ser-661. Residues 678–691 (LGEKTTTAAGSSHS) are compositionally biased toward polar residues. Residues 678–707 (LGEKTTTAAGSSHSRPGVPVEGSPGRNPGV) form a disordered region. Ser-700 is modified (phosphoserine).

The protein belongs to the ACDP family. In terms of tissue distribution, widely expressed. Expressed at higher level in heart and spleen.

It is found in the cell membrane. Probable metal transporter. The chain is Metal transporter CNNM3 (CNNM3) from Homo sapiens (Human).